Consider the following 338-residue polypeptide: MSKLFSEYKLKDVTLKNRIVMSPMCMYSVENKDGIATDFHFAHYVSRAAGGTGLVILEATAVQEVGRISEFDLGLWNDEQVPALKKLVGGLHYHGAKAGIQLAHAGRKAVLPGEIVAPSAIAFDEKSDKPVELTKEAIKEVVADFKRAAYRAKEAGFDVIEIHAAHGYLIHQFLSPITNRREDNYGGPAGNRYKILSDIIKAVKEVWDGPIIVRVSATDYAHGGLQLEDHIPFAKWMKADGVELIDVSTGGLVNVAPPVFPGYQVPFADEIRRGAGIATGALGLITRGEQAEEILCNERADLIIVGRELLRNPYFAKDAAKQLGETIEAPKQYSRAWK.

22–25 (SPMC) is a binding site for FMN. Y27 contributes to the substrate binding site. FMN-binding residues include A59 and Q101. Substrate is bound at residue 163–166 (HAAH). Residues R214 and 306-307 (GR) each bind FMN.

Belongs to the NADH:flavin oxidoreductase/NADH oxidase family. NamA subfamily. Homotetramer. FMN is required as a cofactor.

It carries out the reaction A + NADPH + H(+) = AH2 + NADP(+). Its function is as follows. Catalyzes the reduction of the double bond of an array of alpha,beta-unsaturated aldehydes and ketones. It also reduces the nitro group of nitroester and nitroaromatic compounds. It could have a role in detoxification processes. This chain is NADPH dehydrogenase, found in Listeria monocytogenes serovar 1/2a (strain ATCC BAA-679 / EGD-e).